Here is a 160-residue protein sequence, read N- to C-terminus: Nucleotide-binding protein VV1_2655 (160 aa).

The protein belongs to the YajQ family.

Functionally, nucleotide-binding protein. This is Nucleotide-binding protein VV1_2655 from Vibrio vulnificus (strain CMCP6).